The chain runs to 156 residues: ATP synthase subunit b (156 aa).

The helical transmembrane segment at 11-31 (LIAFALFVWFCMKFVWPPIIN) threads the bilayer.

Belongs to the ATPase B chain family. F-type ATPases have 2 components, F(1) - the catalytic core - and F(0) - the membrane proton channel. F(1) has five subunits: alpha(3), beta(3), gamma(1), delta(1), epsilon(1). F(0) has three main subunits: a(1), b(2) and c(10-14). The alpha and beta chains form an alternating ring which encloses part of the gamma chain. F(1) is attached to F(0) by a central stalk formed by the gamma and epsilon chains, while a peripheral stalk is formed by the delta and b chains.

Its subcellular location is the cell inner membrane. In terms of biological role, f(1)F(0) ATP synthase produces ATP from ADP in the presence of a proton or sodium gradient. F-type ATPases consist of two structural domains, F(1) containing the extramembraneous catalytic core and F(0) containing the membrane proton channel, linked together by a central stalk and a peripheral stalk. During catalysis, ATP synthesis in the catalytic domain of F(1) is coupled via a rotary mechanism of the central stalk subunits to proton translocation. Functionally, component of the F(0) channel, it forms part of the peripheral stalk, linking F(1) to F(0). The protein is ATP synthase subunit b of Haemophilus influenzae (strain PittEE).